The following is a 442-amino-acid chain: tRNA-2-methylthio-N(6)-dimethylallyladenosine synthase (442 aa).

One can recognise an MTTase N-terminal domain in the interval 3 to 118; that stretch reads KKVFIKTFGC…LPELLNARAA (116 aa). Residues cysteine 12, cysteine 49, cysteine 81, cysteine 155, cysteine 159, and cysteine 162 each coordinate [4Fe-4S] cluster. Positions 141-374 constitute a Radical SAM core domain; the sequence is RVEGSSAFVS…QAVINNNIKD (234 aa). One can recognise a TRAM domain in the interval 377 to 440; sequence DERVGTVQRL…TFTLRGEVVV (64 aa).

It belongs to the methylthiotransferase family. MiaB subfamily. Monomer. Requires [4Fe-4S] cluster as cofactor.

Its subcellular location is the cytoplasm. It carries out the reaction N(6)-dimethylallyladenosine(37) in tRNA + (sulfur carrier)-SH + AH2 + 2 S-adenosyl-L-methionine = 2-methylsulfanyl-N(6)-dimethylallyladenosine(37) in tRNA + (sulfur carrier)-H + 5'-deoxyadenosine + L-methionine + A + S-adenosyl-L-homocysteine + 2 H(+). Functionally, catalyzes the methylthiolation of N6-(dimethylallyl)adenosine (i(6)A), leading to the formation of 2-methylthio-N6-(dimethylallyl)adenosine (ms(2)i(6)A) at position 37 in tRNAs that read codons beginning with uridine. In Delftia acidovorans (strain DSM 14801 / SPH-1), this protein is tRNA-2-methylthio-N(6)-dimethylallyladenosine synthase.